We begin with the raw amino-acid sequence, 81 residues long: Cytotoxin 1 (81 aa).

Residues 1–21 (MKTLLLTLVVVTIVCLDLGYT) form the signal peptide. 4 disulfides stabilise this stretch: cysteine 24–cysteine 42, cysteine 35–cysteine 59, cysteine 63–cysteine 74, and cysteine 75–cysteine 80.

The protein belongs to the three-finger toxin family. Short-chain subfamily. Type IA cytotoxin sub-subfamily. As to quaternary structure, monomer in solution; homodimer and oligomer in the presence of negatively charged lipids forming a pore with a size ranging between 20 and 30 Angstroms. In terms of tissue distribution, expressed by the venom gland.

Its subcellular location is the secreted. It is found in the target cell membrane. Shows cytolytic activity on many different cells by forming pores in lipid membranes. Exhibits concentration-dependent growth inhibitory effects in the lung cell lines A549 (IC(50)= 0.88) and NL20 (IC(50)= 1.91), in the prostate cell lines PC-3 (IC(50)= 3.13 ug/ml) and RWPE-1 (IC(50)=0.35 ug/ml), and in the breast cell lines MCF-7 (IC(50)= 9.10 ug/ml) and 184B5 (IC(50)=6.21 ug/ml), with high selectivity for the lung cancer cell line A549 (selectivity index=2.17). Induces primarily necrosis in the A549 lung cancer cell line, and mainly caspase-independent late apoptosis in the breast cancer cells line MCF-7 and in the prostate cancer cell line PC-3. This is Cytotoxin 1 from Naja sumatrana (Equatorial spitting cobra).